Here is a 97-residue protein sequence, read N- to C-terminus: MSEATVNDNAAVKNEKGARKVRSGYVVSTKMNKTIVVELEDRKQHALYGKIMRRNSRVKVHDENETAGVGDRVRIEETRPLSKDKHFRLTEVIEKAR.

Positions 1–20 (MSEATVNDNAAVKNEKGARK) are disordered.

It belongs to the universal ribosomal protein uS17 family. Part of the 30S ribosomal subunit.

Functionally, one of the primary rRNA binding proteins, it binds specifically to the 5'-end of 16S ribosomal RNA. The polypeptide is Small ribosomal subunit protein uS17 (Corynebacterium jeikeium (strain K411)).